Reading from the N-terminus, the 142-residue chain is FAD synthase (142 aa).

ATP is bound by residues 9–10, 14–17, Asp93, and Tyr120; these read VF and HLGH.

This sequence belongs to the archaeal FAD synthase family. In terms of assembly, homodimer. A divalent metal cation serves as cofactor.

The catalysed reaction is FMN + ATP + H(+) = FAD + diphosphate. It participates in cofactor biosynthesis; FAD biosynthesis; FAD from FMN: step 1/1. Functionally, catalyzes the transfer of the AMP portion of ATP to flavin mononucleotide (FMN) to produce flavin adenine dinucleotide (FAD) coenzyme. The protein is FAD synthase of Thermoplasma acidophilum (strain ATCC 25905 / DSM 1728 / JCM 9062 / NBRC 15155 / AMRC-C165).